Consider the following 389-residue polypeptide: Large ribosomal subunit protein uL3 (389 aa).

This sequence belongs to the universal ribosomal protein uL3 family.

The protein localises to the cytoplasm. The polypeptide is Large ribosomal subunit protein uL3 (RPL3) (Debaryomyces hansenii (strain ATCC 36239 / CBS 767 / BCRC 21394 / JCM 1990 / NBRC 0083 / IGC 2968) (Yeast)).